The following is a 229-amino-acid chain: Small ribosomal subunit protein uS2c (229 aa).

It belongs to the universal ribosomal protein uS2 family.

The protein localises to the plastid. Its subcellular location is the chloroplast. This chain is Small ribosomal subunit protein uS2c (rps2), found in Emiliania huxleyi (Coccolithophore).